Consider the following 151-residue polypeptide: Small ribosomal subunit protein uS11 (151 aa).

The protein belongs to the universal ribosomal protein uS11 family.

The sequence is that of Small ribosomal subunit protein uS11 (RPS14) from Podocoryna carnea (Hydrozoan).